A 224-amino-acid chain; its full sequence is UPF0758 protein Nmul_A2138 (224 aa).

The MPN domain maps to 102-224 (AMDSPGPVRA…TLSFAEQGLI (123 aa)). The Zn(2+) site is built by H173, H175, and D186. Residues 173–186 (HNHPSGAAEPSHAD) carry the JAMM motif motif.

It belongs to the UPF0758 family.

The sequence is that of UPF0758 protein Nmul_A2138 from Nitrosospira multiformis (strain ATCC 25196 / NCIMB 11849 / C 71).